We begin with the raw amino-acid sequence, 1364 residues long: MTEQQPDKEKRLGITWHDLTVKGIGKDAAFHENVASQFNIPSRVKESRAKPLLKTIVDNSHGCVKPGEMLLVLGRPGAGCTSLLKVLANRRLGYTKVTGEVWYGSMTADEAKQYRGQIVMNTEEELFFPTLTVQQTIDFATRMKVPHHLPTNLTNPEEFQKTNRDFLLRAMGIEHTGDTRVGNEFVRGVSGGERKRVSIIETMATRGSVFCWDNSTRGLDASTALEYVRCMRSMTDVLGLSSIVTLYQAGNGIYDLFDKVLVLDEGKQTFYGPMHQAKPFMEEMGFLYTDGANIADYLTSVTVPTERQVRPDMENRFPRNANELRSHYEKTQLKRTMALEYNYPNSPQAAEATKEFKEAVHLEKHPGLPAGSPLTVSFYTQVKSAIIRQYQLLWSDKATFLIPQCLNFVQALISGSLFYNAPHDSSGLAFKSGSLFFAVLLNALLSMSEVTGSFAARPVLAKHRGFALYHPAAYCFAQIAADIPLIAMQVTLFALPVYWMTGLKPTGEAFLTYWIITISVTMCMTALFRAIGAAFSSFDAAIKVTGFLMSALIMYTGFLIPKSRMHPWLGWIFWINPLAYGYEAVLSNEFHGQLIPCVNNNLVPNGPGYNNSEFQACAGIRGAPMGASVITGDQYLQGLSYSHAHVWRNFAIVWVWWALFVILTVYFTSNWSQVSGNSGYLVVPREKANKTMHTAVDEEVGSGPDSHDSRNRSGISPIGDKQETSTDGPSKIDSQLIRNTSVFTWKGLTYTVKTPSGDRVLLDHVQGWVKPGMLGALMGSSGAGKTTLLDVLAQRKTEGIIKGSILVDGRDLPVSFQRSAGYCEQLDVHEPLATVREALEFSALLRQSRDTSVENKLKYVDTIIDLLEMHDIENTLIGTTAAGLSVEQRKRLTIGVELVSKPSILIFLDEPTSGLDGQAAFNIVRFLRKLADVGQAVLVTIHQPSASLFAQFDTLLLLAKGGKTVYFGNVGVNGATVNEYFGRNGAPCPQNTNPAEHMIDVVSGSKDWNEVWLASPEYTAMTQELDHLIRDAASKPPATLDDGHEFATPIWTQLKLVTHRNNTSLWRNTNYINNKLMLHITSGLLNGFSFWKIGNTVADLQMHLFTIFNFIFVAPGVIAQLQPLFLERRDIYEAREKKSKMYHWSAFATGLIVSELPYLVVCAVVYYMTWYYTVGFPSGSDKAGAVFFVVLMYEFIYTGIGQAIAAYTPNAIFAVLINPLIIAILVFFCGVYVPYAQIQAVWRYWLYYLDPFNYLMGSLLIFTTFDAPVHCEKEEFAVFNTPDGQTCGEYLAEYMQGLGSRTNLVNPSATRDCKVCQFRTGGDYLYTLNLKDYYYGWRDAGIVALFAISSYAKLRTKASKKAES.

The ABC transporter 1 domain occupies 42–290 (SRVKESRAKP…MEEMGFLYTD (249 aa)). 2 N-linked (GlcNAc...) asparagine glycosylation sites follow: Asn-152 and Asn-214. 5 helical membrane passes run 435-455 (LFFA…GSFA), 483-503 (IPLI…MTGL), 508-528 (EAFL…TALF), 540-560 (AAIK…GFLI), and 567-587 (PWLG…AVLS). Residue Asn-610 is glycosylated (N-linked (GlcNAc...) asparagine). Residues 650-670 (FAIVWVWWALFVILTVYFTSN) traverse the membrane as a helical segment. 3 N-linked (GlcNAc...) asparagine glycosylation sites follow: Asn-689, Asn-711, and Asn-739. A disordered region spans residues 697–732 (DEEVGSGPDSHDSRNRSGISPIGDKQETSTDGPSKI). Residues 737–985 (IRNTSVFTWK…TVNEYFGRNG (249 aa)) enclose the ABC transporter 2 domain. Residue 779–786 (GSSGAGKT) participates in ATP binding. A run of 6 helical transmembrane segments spans residues 1076–1094 (LMLH…WKIG), 1105–1125 (FTIF…QPLF), 1146–1166 (AFAT…AVVY), 1185–1205 (AVFF…QAIA), 1211–1231 (AIFA…FCGV), and 1245–1265 (WLYY…FTTF).

The protein belongs to the ABC transporter superfamily. ABCG family. PDR (TC 3.A.1.205) subfamily.

The protein localises to the cell membrane. Its function is as follows. ABC-type transporter; part of the gene cluster that mediates the biosynthesis of cordycepin (COR) and pentostatin (PTN), two adenosine analogs with related bioactivity profiles as both mimic adenosine and can inhibit some of the processes that are adenosine dependent. Mediates the pumping of pentostatin but not of cordycepin out of fungal cells. Decreasing intracellular pentostatin releases adenosine deaminase (ADA) inhibition, allowing ADA to deaminate cordycepin into non-toxic 3'-d. The polypeptide is ABC-type transporter cns4 (Cordyceps militaris (strain CM01) (Caterpillar fungus)).